A 217-amino-acid polypeptide reads, in one-letter code: Phosphatidylinositol phosphate synthase (217 aa).

2 consecutive transmembrane segments (helical) span residues 28–49 and 55–74; these read LTPD…LTLF and FAGA…DGAM. A CDP-1,2-diacyl-sn-glycerol is bound at residue 31 to 34; it reads DVVT. Mg(2+) contacts are provided by aspartate 68 and aspartate 71. Residues glycine 72, arginine 76, and threonine 82 each coordinate a CDP-1,2-diacyl-sn-glycerol. Mg(2+)-binding residues include aspartate 89 and aspartate 93. The Proton acceptor role is filled by aspartate 93. The next 4 helical transmembrane spans lie at 95 to 112, 118 to 136, 156 to 173, and 179 to 200; these read ISDG…AFHM, VIAT…YIKA, LIIV…FVPW, and VGMW…HTVW.

The protein belongs to the CDP-alcohol phosphatidyltransferase class-I family. As to quaternary structure, homodimer. Mg(2+) serves as cofactor.

Its subcellular location is the cell membrane. The enzyme catalyses a CDP-1,2-diacyl-sn-glycerol + 1D-myo-inositol 3-phosphate = a 1,2-diacyl-sn-glycero-3-phospho-(1D-myo-inositol-3-phosphate) + CMP + H(+). It catalyses the reaction 1,2-di-(9Z-octadecenoyl)-sn-glycero-3-cytidine-5'-diphosphate + 1D-myo-inositol 3-phosphate = 1,2-di-(9Z-octadecenoyl)-sn-glycero-3-phospho-(1D-myo-inositol-3-phosphate) + CMP + H(+). It participates in phospholipid metabolism; phosphatidylinositol phosphate biosynthesis. Competitively inhibited by several inositol 1-phosphate analogs, including the phosphonate analog 1-deoxy-1-phosphonomethyl-myo-inositol (Ino-C-P). Catalyzes the conjugation of the 1'-hydroxyl group of D-myo-inositol-3-phosphate (also named L-myo-inositol-1-phosphate) with a lipid tail of cytidine diphosphate diacylglycerol (CDP-DAG), forming phosphatidylinositol phosphate (PIP) and CMP. PIP is a precursor of phosphatidylinositol (PI) which is an essential lipid for mycobacteria required for formation of their cell wall. This Mycobacterium bovis (strain BCG / Pasteur 1173P2) protein is Phosphatidylinositol phosphate synthase.